Consider the following 465-residue polypeptide: Sensor histidine kinase ZraS (465 aa).

Residues Met-1 to Trp-14 are Cytoplasmic-facing. The helical transmembrane segment at Leu-15–Ile-35 threads the bilayer. At Arg-36–Thr-203 the chain is on the periplasmic side. A helical membrane pass occupies residues Leu-204 to Tyr-224. At Gln-225–Asp-465 the chain is on the cytoplasmic side. A Histidine kinase domain is found at Gly-253 to Ala-461. At His-256 the chain carries Phosphohistidine; by autocatalysis.

Post-translationally, autophosphorylated.

The protein localises to the cell inner membrane. The catalysed reaction is ATP + protein L-histidine = ADP + protein N-phospho-L-histidine.. Its activity is regulated as follows. Activity of the ZraS/ZraR two-component system is repressed by the zinc-bound form of ZraP, which probably interacts with the periplasmic region of ZraS. Part of the Zra signaling pathway, an envelope stress response (ESR) system composed of the periplasmic accessory protein ZraP, the histidine kinase ZraS and the transcriptional regulator ZraR. The ZraPSR system contributes to antibiotic resistance and is important for membrane integrity in the presence of membrane-targeting biocides. ZraS is a member of the two-component regulatory system ZraS/ZraR. Functions as a membrane-associated sensor kinase that phosphorylates ZraR in response to high concentrations of Zn(2+) or Pb(2+) in the medium. The polypeptide is Sensor histidine kinase ZraS (zraS) (Salmonella typhi).